The chain runs to 1372 residues: DNA-directed RNA polymerase subunit beta' (1372 aa).

Cys69, Cys71, Cys84, and Cys87 together coordinate Zn(2+). Mg(2+) contacts are provided by Asp460, Asp462, and Asp464. 4 residues coordinate Zn(2+): Cys808, Cys882, Cys889, and Cys892.

Belongs to the RNA polymerase beta' chain family. The RNAP catalytic core consists of 2 alpha, 1 beta, 1 beta' and 1 omega subunit. When a sigma factor is associated with the core the holoenzyme is formed, which can initiate transcription. Mg(2+) serves as cofactor. The cofactor is Zn(2+).

It carries out the reaction RNA(n) + a ribonucleoside 5'-triphosphate = RNA(n+1) + diphosphate. Its function is as follows. DNA-dependent RNA polymerase catalyzes the transcription of DNA into RNA using the four ribonucleoside triphosphates as substrates. This Rickettsia conorii (strain ATCC VR-613 / Malish 7) protein is DNA-directed RNA polymerase subunit beta'.